The chain runs to 323 residues: CYFIP-related Rac1 interactor A (323 aa).

The protein belongs to the CYRI family. As to quaternary structure, interacts with RAC1 (GTP-bound form preferentially).

The protein resides in the membrane. Functionally, may negatively regulate RAC1 signaling and RAC1-driven cytoskeletal remodeling. May regulate chemotaxis, cell migration and epithelial polarization by controlling the polarity, plasticity, duration and extent of protrusions. The polypeptide is CYFIP-related Rac1 interactor A (CYRIA) (Bos taurus (Bovine)).